Here is a 141-residue protein sequence, read N- to C-terminus: Hemoglobin subunit alpha (141 aa).

The Globin domain occupies 1-141; the sequence is VLSPADKTNV…VSTVLTSKYR (141 aa). Ser-3 is modified (phosphoserine). Lys-7 bears the N6-succinyllysine mark. At Thr-8 the chain carries Phosphothreonine. Position 11 is an N6-succinyllysine (Lys-11). Ser-35 is modified (phosphoserine). Lys-40 carries the post-translational modification N6-succinyllysine. Ser-49 carries the post-translational modification Phosphoserine. Residue His-58 participates in O2 binding. His-87 is a heme b binding site. Phosphoserine is present on Ser-102. Thr-108 is modified (phosphothreonine). The residue at position 124 (Ser-124) is a Phosphoserine. Phosphothreonine occurs at positions 134 and 137. A Phosphoserine modification is found at Ser-138.

It belongs to the globin family. As to quaternary structure, heterotetramer of two alpha chains and two beta chains. Red blood cells.

Its function is as follows. Involved in oxygen transport from the lung to the various peripheral tissues. In terms of biological role, hemopressin acts as an antagonist peptide of the cannabinoid receptor CNR1. Hemopressin-binding efficiently blocks cannabinoid receptor CNR1 and subsequent signaling. In Eulemur fulvus fulvus (Brown lemur), this protein is Hemoglobin subunit alpha (HBA).